The primary structure comprises 244 residues: Mitochondrial import inner membrane translocase subunit Tim21 (244 aa).

Residues Met-1–Cys-18 constitute a mitochondrion transit peptide. The interval Val-69–Gln-89 is disordered. Residues Phe-108 to Ile-128 form a helical membrane-spanning segment.

Belongs to the TIM21 family. Component of the TIM23 complex. Component of the MITRAC (mitochondrial translation regulation assembly intermediate of cytochrome c oxidase complex) complex, the core components of this complex being COA3/MITRAC12 and COX14. Interacts with COA3 and MT-CO1/COX1.

Its subcellular location is the mitochondrion membrane. Functionally, participates in the translocation of transit peptide-containing proteins across the mitochondrial inner membrane. Also required for assembly of mitochondrial respiratory chain complex I and complex IV as component of the MITRAC (mitochondrial translation regulation assembly intermediate of cytochrome c oxidase complex) complex. Probably shuttles between the presequence translocase and respiratory-chain assembly intermediates in a process that promotes incorporation of early nuclear-encoded subunits into these complexes. This is Mitochondrial import inner membrane translocase subunit Tim21 (TIMM21) from Bos taurus (Bovine).